Consider the following 333-residue polypeptide: DNA-directed RNA polymerase subunit alpha (333 aa).

Positions 1 to 234 (MQISVNEFLT…QQLAAFVDLK (234 aa)) are alpha N-terminal domain (alpha-NTD). Residues 248 to 333 (IDPILLRPVD…SLKKDDKATA (86 aa)) are alpha C-terminal domain (alpha-CTD).

It belongs to the RNA polymerase alpha chain family. In terms of assembly, homodimer. The RNAP catalytic core consists of 2 alpha, 1 beta, 1 beta' and 1 omega subunit. When a sigma factor is associated with the core the holoenzyme is formed, which can initiate transcription.

It carries out the reaction RNA(n) + a ribonucleoside 5'-triphosphate = RNA(n+1) + diphosphate. Functionally, DNA-dependent RNA polymerase catalyzes the transcription of DNA into RNA using the four ribonucleoside triphosphates as substrates. The polypeptide is DNA-directed RNA polymerase subunit alpha (Pseudomonas syringae pv. tomato (strain ATCC BAA-871 / DC3000)).